The sequence spans 514 residues: 3-octaprenyl-4-hydroxybenzoate carboxy-lyase (514 aa).

Residue asparagine 177 coordinates Mn(2+). Residues 180–182 (IYR), 194–196 (RWL), and 199–200 (RG) contribute to the prenylated FMN site. Residue glutamate 243 participates in Mn(2+) binding. The active-site Proton donor is the aspartate 314.

It belongs to the UbiD family. Homohexamer. It depends on prenylated FMN as a cofactor. Mn(2+) serves as cofactor.

Its subcellular location is the cell membrane. The catalysed reaction is a 4-hydroxy-3-(all-trans-polyprenyl)benzoate + H(+) = a 2-(all-trans-polyprenyl)phenol + CO2. Its pathway is cofactor biosynthesis; ubiquinone biosynthesis. Catalyzes the decarboxylation of 3-octaprenyl-4-hydroxy benzoate to 2-octaprenylphenol, an intermediate step in ubiquinone biosynthesis. In Bordetella bronchiseptica (strain ATCC BAA-588 / NCTC 13252 / RB50) (Alcaligenes bronchisepticus), this protein is 3-octaprenyl-4-hydroxybenzoate carboxy-lyase.